The chain runs to 567 residues: TGF-beta receptor type-2 (567 aa).

The N-terminal stretch at 1–22 (MGRGLLRGLWPLHIVLWTRIAS) is a signal peptide. Residues 23–166 (TIPPHVQKSV…NPDLLLVIFQ (144 aa)) lie on the Extracellular side of the membrane. 6 cysteine pairs are disulfide-bonded: Cys-51-Cys-84, Cys-54-Cys-71, Cys-61-Cys-67, Cys-77-Cys-101, Cys-121-Cys-136, and Cys-138-Cys-143. N-linked (GlcNAc...) asparagine glycosylation is found at Asn-70 and Asn-94. Residue Asn-154 is glycosylated (N-linked (GlcNAc...) asparagine). The helical transmembrane segment at 167 to 187 (VTGISLLPPLGVAISVIIIFY) threads the bilayer. Topologically, residues 188–567 (CYRVNRQQKL…PEDGSLNTTK (380 aa)) are cytoplasmic. Residues 244 to 544 (IELDTLVGKG…AERFSELEHL (301 aa)) form the Protein kinase domain. ATP is bound by residues 250–258 (VGKGRFAEV) and Lys-277. Asp-379 functions as the Proton acceptor in the catalytic mechanism. A phosphoserine mark is found at Ser-409, Ser-548, and Ser-553. The interval 439–567 (VESFKQTDVY…PEDGSLNTTK (129 aa)) is sufficient for interaction with CLU.

It belongs to the protein kinase superfamily. TKL Ser/Thr protein kinase family. TGFB receptor subfamily. As to quaternary structure, homodimer. Heterohexamer; TGFB1, TGFB2 and TGFB3 homodimeric ligands assemble a functional receptor composed of two TGFBR1 and TGFBR2 heterodimers to form a ligand-receptor heterohexamer. The respective affinity of TGFRB1 and TGFRB2 for the ligands may modulate the kinetics of assembly of the receptor and may explain the different biological activities of TGFB1, TGFB2 and TGFB3. Component of a complex composed of TSC22D1 (via N-terminus), TGFBR1 and TGFBR2; the interaction between TSC22D1 and TGFBR1 is inhibited by SMAD7 and promoted by TGFB1. Interacts with DAXX. Interacts with DYNLT4. Interacts with ZFYVE9; ZFYVE9 recruits SMAD2 and SMAD3 to the TGF-beta receptor. Interacts with and is activated by SCUBE3; this interaction does not affect TGFB1-binding to TGFBR2. Interacts with VPS39; this interaction is independent of the receptor kinase activity and of the presence of TGF-beta. Interacts with CLU. Homodimer; disulfide-linked. The cofactor is Mg(2+). Mn(2+) serves as cofactor. Post-translationally, phosphorylated on a Ser/Thr residue in the cytoplasmic domain.

The protein resides in the cell membrane. The protein localises to the membrane raft. Its subcellular location is the secreted. The catalysed reaction is L-threonyl-[receptor-protein] + ATP = O-phospho-L-threonyl-[receptor-protein] + ADP + H(+). The enzyme catalyses L-seryl-[receptor-protein] + ATP = O-phospho-L-seryl-[receptor-protein] + ADP + H(+). Its function is as follows. Transmembrane serine/threonine kinase forming with the TGF-beta type I serine/threonine kinase receptor, TGFBR1, the non-promiscuous receptor for the TGF-beta cytokines TGFB1, TGFB2 and TGFB3. Transduces the TGFB1, TGFB2 and TGFB3 signal from the cell surface to the cytoplasm and thus regulates a plethora of physiological and pathological processes including cell cycle arrest in epithelial and hematopoietic cells, control of mesenchymal cell proliferation and differentiation, wound healing, extracellular matrix production, immunosuppression and carcinogenesis. The formation of the receptor complex composed of 2 TGFBR1 and 2 TGFBR2 molecules symmetrically bound to the cytokine dimer results in the phosphorylation and activation of TGFBR1 by the constitutively active TGFBR2. Activated TGFBR1 phosphorylates SMAD2 which dissociates from the receptor and interacts with SMAD4. The SMAD2-SMAD4 complex is subsequently translocated to the nucleus where it modulates the transcription of the TGF-beta-regulated genes. This constitutes the canonical SMAD-dependent TGF-beta signaling cascade. Also involved in non-canonical, SMAD-independent TGF-beta signaling pathways. Functionally, has transforming growth factor beta-activated receptor activity. In terms of biological role, binds TGFB1, TGFB2 and TGFB3 in the picomolar affinity range without the participation of additional receptors. Blocks activation of SMAD2 and SMAD3 by TGFB1. The polypeptide is TGF-beta receptor type-2 (TGFBR2) (Homo sapiens (Human)).